The primary structure comprises 354 residues: Malate dehydrogenase 1, peroxisomal (354 aa).

The segment at 6–14 is peroxisomal targeting signal PTS2; sequence RIARISAHL. NAD(+) is bound by residues 49 to 55 and Asp75; that span reads GAAGGIG. Residues Arg122 and Arg128 each coordinate substrate. Residues Asn135 and 158 to 160 each bind NAD(+); that span reads ISN. Residues Asn160 and Arg194 each contribute to the substrate site. His218 acts as the Proton acceptor in catalysis. Met269 provides a ligand contact to NAD(+).

This sequence belongs to the LDH/MDH superfamily. MDH type 1 family. In terms of assembly, homodimer. In terms of tissue distribution, expressed in rosette leaves at low levels.

The protein resides in the peroxisome. It catalyses the reaction (S)-malate + NAD(+) = oxaloacetate + NADH + H(+). In terms of biological role, catalyzes a reversible NAD-dependent dehydrogenase reaction involved in central metabolism and redox homeostasis between organelle compartments. Peroxisomal NAD-dependent malate dehydrogenase involved in fatty acid beta-oxidation. Reoxidizes NADH from the beta-oxidation and provides NAD for the conversion of fatty acyl-CoA to acetyl-CoA. Does not participate directly in the glyoxylate cycle. Required for maintenance of photosynthetic rates under photorespiratory conditions, and carbon flow during photorespiration. Supplies NADH reductant to the peroxisomal hydroxypyruvate reductase (HPR), which reduces hydroxypyruvate into glycerate in the photorespiratory cycle. The polypeptide is Malate dehydrogenase 1, peroxisomal (Arabidopsis thaliana (Mouse-ear cress)).